A 398-amino-acid polypeptide reads, in one-letter code: Phosphoglycerate kinase (398 aa).

Substrate is bound by residues 23–25, Arg38, 61–64, Arg122, and Arg155; these read DFN and HLGK. ATP is bound by residues Lys206, Gly297, Glu328, and 354-357; that span reads GGDS.

The protein belongs to the phosphoglycerate kinase family. As to quaternary structure, monomer.

It localises to the cytoplasm. It catalyses the reaction (2R)-3-phosphoglycerate + ATP = (2R)-3-phospho-glyceroyl phosphate + ADP. Its pathway is carbohydrate degradation; glycolysis; pyruvate from D-glyceraldehyde 3-phosphate: step 2/5. The polypeptide is Phosphoglycerate kinase (Clostridium novyi (strain NT)).